A 956-amino-acid chain; its full sequence is MAM domain-containing glycosylphosphatidylinositol anchor protein 1 (956 aa).

The first 18 residues, 1–18 (MEVTCLLLLALIPFHCRG), serve as a signal peptide directing secretion. Ig-like domains lie at 24–123 (PAQA…KSIR) and 132–230 (PVLT…KSIT). The N-linked (GlcNAc...) asparagine glycan is linked to N42. Cystine bridges form between C60–C108 and C157–C214. N-linked (GlcNAc...) asparagine glycosylation is found at N235, N257, and N307. 4 Ig-like domains span residues 240–323 (PTLK…KTVN), 338–432 (PDMI…VEVN), 440–534 (PTIS…VQLT), and 539–632 (PEVE…FQVS). Disulfide bonds link C262-C308, C357-C415, C463-C514, and C560-C616. Residues 644–744 (TPNPTRSHKL…SRVIHYTEPI (101 aa)) form the Fibronectin type-III domain. The 168-residue stretch at 752–919 (NTCHFEDEKI…VTLKKGECPR (168 aa)) folds into the MAM domain. Residues 780–789 (LTQNPKRSPN) show a composition bias toward polar residues. The disordered stretch occupies residues 780–799 (LTQNPKRSPNTGPPTDISGT). S933 is lipidated: GPI-anchor amidated serine. Residues 934 to 956 (GAPRLSSLQLWGSMTIFLLALQR) constitute a propeptide, removed in mature form.

Interacts heterophilically through its MAM domain with proteins in axon-rich regions and through its Ig-like domains with proteins in differentiating muscle. Interacts (through the Ig-like domains) with NLGN2. High levels detected in developing central and peripheral nervous systems with little expression elsewhere. In brain, highest levels in cerebral cortex and hindbrain at E15. At postnatal day 1, highest levels in basilar pons and superficial layers of the neocortex. In the developing spinal cord, restricted to a subpopulation of neurons in the dorsal and spinal ventral cord, probably D1 interneurons. Expressed in brain.

It is found in the cell membrane. Required for radial migration of cortical neurons in the superficial layer of the neocortex. Plays a role in the formation or maintenance of inhibitory synapses. May function by inhibiting the activity of NLGN2. This Rattus norvegicus (Rat) protein is MAM domain-containing glycosylphosphatidylinositol anchor protein 1 (Mdga1).